The following is a 431-amino-acid chain: Beclin-2 (431 aa).

The segment at 17–74 is disordered; that stretch reads LSGSSESRSLPAAPAPTSGQAEPGDTREPGVTTREVTDAEEQQDGASSRSPPGDGSVS. Positions 125-248 form a coiled coil; that stretch reads LLEQLDIQLA…ARVQRDRLKE (124 aa). The segment at 173–243 is required for homodimer formation; that stretch reads EARLVQELED…NQLQYARVQR (71 aa).

This sequence belongs to the beclin family. As to quaternary structure, homodimer (via coiled-coil domain). Interacts (via coiled-coil domain) with ATG14 (via coiled-coil domain); this interaction is tighter than BECN2 self-association. Interacts with AMBRA1, UVRAG and PIK3C3/VPS34; these interactions are not disrupted by starvation. Does not interact with RUBCN. Interacts (via N-terminus) with GPRASP1/GASP1; the interaction is direct. In terms of tissue distribution, present in fetal and adult brain (at protein level).

The protein localises to the cytoplasm. Involved in 2 distinct lysosomal degradation pathways: acts as a regulator of autophagy and as a regulator of G-protein coupled receptors turnover. Regulates degradation in lysosomes of a variety of G-protein coupled receptors via its interaction with GPRASP1/GASP1. The sequence is that of Beclin-2 from Homo sapiens (Human).